A 275-amino-acid polypeptide reads, in one-letter code: Dermonecrotic toxin SpeSicTox-betaIIA3ii (275 aa).

Residue His-5 is part of the active site. Mg(2+) contacts are provided by Glu-25 and Asp-27. His-41 (nucleophile) is an active-site residue. Cystine bridges form between Cys-45–Cys-51 and Cys-47–Cys-190. A Mg(2+)-binding site is contributed by Asp-85.

It belongs to the arthropod phospholipase D family. Class II subfamily. Mg(2+) is required as a cofactor. In terms of tissue distribution, expressed by the venom gland.

It localises to the secreted. The enzyme catalyses an N-(acyl)-sphingosylphosphocholine = an N-(acyl)-sphingosyl-1,3-cyclic phosphate + choline. It catalyses the reaction an N-(acyl)-sphingosylphosphoethanolamine = an N-(acyl)-sphingosyl-1,3-cyclic phosphate + ethanolamine. It carries out the reaction a 1-acyl-sn-glycero-3-phosphocholine = a 1-acyl-sn-glycero-2,3-cyclic phosphate + choline. The catalysed reaction is a 1-acyl-sn-glycero-3-phosphoethanolamine = a 1-acyl-sn-glycero-2,3-cyclic phosphate + ethanolamine. Dermonecrotic toxins cleave the phosphodiester linkage between the phosphate and headgroup of certain phospholipids (sphingolipid and lysolipid substrates), forming an alcohol (often choline) and a cyclic phosphate. This toxin acts on sphingomyelin (SM). It may also act on ceramide phosphoethanolamine (CPE), lysophosphatidylcholine (LPC) and lysophosphatidylethanolamine (LPE), but not on lysophosphatidylserine (LPS), and lysophosphatidylglycerol (LPG). It acts by transphosphatidylation, releasing exclusively cyclic phosphate products as second products. Induces dermonecrosis, hemolysis, increased vascular permeability, edema, inflammatory response, and platelet aggregation. In Sicarius peruensis (Six-eyed sand spider), this protein is Dermonecrotic toxin SpeSicTox-betaIIA3ii.